Reading from the N-terminus, the 500-residue chain is NAD(P)H-quinone oxidoreductase chain 4, chloroplastic (500 aa).

14 helical membrane-spanning segments follow: residues 4–24, 35–55, 87–107, 113–130, 134–154, 167–187, 208–228, 242–262, 272–292, 305–325, 330–350, 386–406, 416–436, and 462–482; these read FPWL…IFFL, YTIC…CYHF, IGPI…AWPV, LFHF…GLFS, LLLF…LLAM, FILY…GVAL, VLEI…SPII, HYST…YGLI, AHSI…IYAA, IAYS…SLTD, GALL…FLAG, LALP…GIIT, LLIT…SLSM, and LFLS…PDFV.

It belongs to the complex I subunit 4 family.

It localises to the plastid. The protein resides in the chloroplast thylakoid membrane. The enzyme catalyses a plastoquinone + NADH + (n+1) H(+)(in) = a plastoquinol + NAD(+) + n H(+)(out). The catalysed reaction is a plastoquinone + NADPH + (n+1) H(+)(in) = a plastoquinol + NADP(+) + n H(+)(out). The sequence is that of NAD(P)H-quinone oxidoreductase chain 4, chloroplastic from Solanum lycopersicum (Tomato).